The primary structure comprises 329 residues: Minor capsid protein A1 (329 aa).

The protein resides in the virion. In terms of biological role, minor capsid protein. The chain is Minor capsid protein A1 from Escherichia coli (Bacteriophage Q-beta).